We begin with the raw amino-acid sequence, 151 residues long: Prefoldin subunit 5 (151 aa).

A coiled-coil region spans residues 15 to 35 (IDQLKALKEQADLEVNLLQDS).

This sequence belongs to the prefoldin subunit alpha family. In terms of assembly, heterohexamer of two PFD-alpha type and four PFD-beta type subunits forming prefoldin co-chaperone complex. Interacts with PFD6. Binds to the DELLA protein GAI.

Its subcellular location is the cytoplasm. It localises to the nucleus. Binds specifically to cytosolic chaperonin (c-CPN) and transfers target proteins to it. Binds to nascent polypeptide chain and promotes folding in an environment in which there are many competing pathways for nonnative proteins. Together with other chaperonins, contribute to the regulation of gene expression by modulating the spliceosome function on pre-mRNA splicing post-transcriptionally by acting as a co-chaperone of Hsp90 to control levels of LSM8. Required for the biogenesis of tubulins and for subsequent microtubules (MTs) organization and dynamicity. Necessary for tolerance to NaCl salt stress. Involved in the process leading to microtubules dissociation in response to gibberellic acid (GA) probably due to the DELLA proteins-mediated translocation of the prefoldin co-chaperone complex from the cytoplasm to the nucleus. Prevents cold acclimation (e.g. 7 days at 4 degrees Celsius) in a DELLA proteins-dependent manner by promoting nuclear proteasome-mediated HY5 degradation, thus modulating the expression of several genes and reducing anthocyanin biosynthesis, but seems not involved in constitutive freezing tolerance. Contributes to the GA-dependent regulation of PIN2 trafficking at the plasma membrane, thus influencing auxin flux. This is Prefoldin subunit 5 from Arabidopsis thaliana (Mouse-ear cress).